Consider the following 343-residue polypeptide: Anthranilate phosphoribosyltransferase (343 aa).

5-phospho-alpha-D-ribose 1-diphosphate-binding positions include glycine 84, 87-88 (GD), threonine 92, 94-97 (NIST), 112-120 (KHGNRGVSS), and serine 124. Glycine 84 is an anthranilate binding site. Serine 96 contributes to the Mg(2+) binding site. Asparagine 115 contacts anthranilate. An anthranilate-binding site is contributed by arginine 170. Mg(2+) contacts are provided by aspartate 229 and glutamate 230.

Belongs to the anthranilate phosphoribosyltransferase family. Homodimer. The cofactor is Mg(2+).

The catalysed reaction is N-(5-phospho-beta-D-ribosyl)anthranilate + diphosphate = 5-phospho-alpha-D-ribose 1-diphosphate + anthranilate. It functions in the pathway amino-acid biosynthesis; L-tryptophan biosynthesis; L-tryptophan from chorismate: step 2/5. Catalyzes the transfer of the phosphoribosyl group of 5-phosphorylribose-1-pyrophosphate (PRPP) to anthranilate to yield N-(5'-phosphoribosyl)-anthranilate (PRA). This chain is Anthranilate phosphoribosyltransferase, found in Burkholderia orbicola (strain AU 1054).